The primary structure comprises 161 residues: Ubiquitin D (161 aa).

Ubiquitin-like domains follow at residues 3-77 (SCVC…LKVV) and 86-159 (LSLV…AHCI).

The protein belongs to the ubiquitin D family. In terms of assembly, interacts directly with the 26S proteasome. Interacts with NUB1; this interaction facilitates the linking of UBD-conjugated target protein to the proteasome complex and accelerates its own degradation and that of its conjugates. Interacts (via ubiquitin-like 1 domain) with the spindle checkpoint protein MAD2L1 during mitosis. Present in aggresomes of proteasome inhibited cells. Interacts with HDAC6 under proteasome impairment conditions. Forms a thioester with UBA6 in cells stimulated with tumor necrosis factor-alpha (TNFa) and interferon-gamma (IFNg). Interacts with SQSTM1 and TP53/p53. Can be acetylated.

The protein localises to the nucleus. It is found in the cytoplasm. In terms of biological role, ubiquitin-like protein modifier which can be covalently attached to target proteins and subsequently leads to their degradation by the 26S proteasome, in a NUB1-dependent manner. Conjugation to the target protein is activated by UBA6 via adenylation of its C-terminal glycine. Probably functions as a survival factor. Promotes the expression of the proteasome subunit beta type-9 (PSMB9/LMP2). Regulates TNF-alpha-induced and LPS-mediated activation of the central mediator of innate immunity NF-kappa-B by promoting TNF-alpha-mediated proteasomal degradation of ubiquitinated-I-kappa-B-alpha. Required for TNF-alpha-induced p65 nuclear translocation in renal tubular epithelial cells (RTECs). May be involved in dendritic cell (DC) maturation, the process by which immature dendritic cells differentiate into fully competent antigen-presenting cells that initiate T-cell responses. Mediates mitotic non-disjunction and chromosome instability, in long-term in vitro culture and cancers, by abbreviating mitotic phase and impairing the kinetochore localization of MAD2L1 during the prometaphase stage of the cell cycle. May be involved in the formation of aggresomes when proteasome is saturated or impaired. Mediates apoptosis in a caspase-dependent manner, especially in renal epithelium and tubular cells during renal diseases. This Rattus norvegicus (Rat) protein is Ubiquitin D (Ubd).